A 147-amino-acid chain; its full sequence is Large ribosomal subunit protein uL15 (147 aa).

The interval 1–54 is disordered; it reads MKLFELQPAPGSKKLPNRKGRGIGSGNGKTGGRGHKGQNARAGGGVRPGFEGGQ. Gly residues-rich tracts occupy residues 22 to 31 and 42 to 52; these read GIGSGNGKTG and AGGGVRPGFEG.

The protein belongs to the universal ribosomal protein uL15 family. Part of the 50S ribosomal subunit.

Functionally, binds to the 23S rRNA. This chain is Large ribosomal subunit protein uL15, found in Ruminiclostridium cellulolyticum (strain ATCC 35319 / DSM 5812 / JCM 6584 / H10) (Clostridium cellulolyticum).